Consider the following 318-residue polypeptide: DNA-directed RNA polymerase subunit alpha 2 (318 aa).

Positions 1–227 (MALENLLHPT…NQLRNILDIE (227 aa)) are alpha N-terminal domain (alpha-NTD). Residues 242-318 (INPILLKHVE…TLIENWPQDL (77 aa)) are alpha C-terminal domain (alpha-CTD).

It belongs to the RNA polymerase alpha chain family. In terms of assembly, homodimer. The RNAP catalytic core consists of 2 alpha, 1 beta, 1 beta' and 1 omega subunit. When a sigma factor is associated with the core the holoenzyme is formed, which can initiate transcription.

The catalysed reaction is RNA(n) + a ribonucleoside 5'-triphosphate = RNA(n+1) + diphosphate. Functionally, DNA-dependent RNA polymerase catalyzes the transcription of DNA into RNA using the four ribonucleoside triphosphates as substrates. In Francisella tularensis subsp. tularensis (strain FSC 198), this protein is DNA-directed RNA polymerase subunit alpha 2.